We begin with the raw amino-acid sequence, 421 residues long: Tyrosine-protein phosphatase non-receptor type 20 (421 aa).

Residues 1–58 (MSSPGNVRQKHGRDNDEHEGDSDDLNLQKSLPSSSQQKTPTKPVFGNKVNSESVKTSH) are disordered. The segment covering 27–41 (LQKSLPSSSQQKTPT) has biased composition (low complexity). Over residues 48–58 (KVNSESVKTSH) the composition is skewed to polar residues. Phosphoserine is present on Ser-76. Residues 93-116 (RWSSVDPESAGPSKTVSTVLSESS) form a disordered region. The segment covering 104 to 116 (PSKTVSTVLSESS) has biased composition (polar residues). Ser-122 carries the post-translational modification Phosphoserine. A Tyrosine-protein phosphatase domain is found at 160-413 (IIREFLELEE…QFCYEIVLEV (254 aa)). Substrate contacts are provided by residues Asp-324, 354–360 (CSAGVGR), and Gln-398. Cys-354 acts as the Phosphocysteine intermediate in catalysis.

The protein belongs to the protein-tyrosine phosphatase family. Non-receptor class subfamily.

The protein resides in the nucleus. It is found in the cytoplasm. Its subcellular location is the cytoskeleton. It localises to the microtubule organizing center. The protein localises to the centrosome. It catalyses the reaction O-phospho-L-tyrosyl-[protein] + H2O = L-tyrosyl-[protein] + phosphate. Tyrosine-protein phosphatase targeted to sites of actin polymerization in response of varied extracellular stimuli. Has tyrosine phosphatase activity towards various tyrosyl phosphorylated substrates. This chain is Tyrosine-protein phosphatase non-receptor type 20 (Ptpn20), found in Rattus norvegicus (Rat).